Reading from the N-terminus, the 811-residue chain is Protein VAC14 homolog (811 aa).

7 HEAT repeats span residues 81 to 119, 122 to 160, 240 to 278, 334 to 372, 375 to 412, 431 to 469, and 472 to 510; these read DSYMESILLPVLYCFNDSDSKIRYYACESMYNIGKVAKG, FRYFNLIFDVLCKLFADTEITVKNGAELLDRLIKDIVMQ, ISYLPFLLDGLMNYLSDPNESIRIVTSNCLYDFLREIQK, QIDYKRILEIIIDHLGSSVPLIQEKALKWLFEFIYIAPK, LLQIPKVLENLLPLMSNDENMRQSAKDLSQNLVILVSK, SVDFRSLIEVLQKLLSNDNEETRLCALEWVLLLQRRTGG, and INMHDPIFQTLLLQLSDPSDLVVSRTLELLAHIAISHKS. The segment covering 775–785 has biased composition (low complexity); it reads TSASGITTTAS. Positions 775 to 811 are disordered; the sequence is TSASGITTTASNSRDSFITRLPPTAALSTGARKKPKQ.

It belongs to the VAC14 family. In terms of assembly, component of the PI(3,5)P2 regulatory complex, composed of ATG18, FIG4, FAB1, VAC14 and VAC7. VAC14 nucleates the assembly of the complex and serves as a scaffold.

Its subcellular location is the cytoplasm. It is found in the vacuole membrane. The PI(3,5)P2 regulatory complex regulates both the synthesis and turnover of phosphatidylinositol 3,5-bisphosphate (PtdIns(3,5)P2). Regulates the synthesis of PtdIns(3,5)P2 by positive activation of FAB1 and by controlling FIG4 localization. This is Protein VAC14 homolog from Schizosaccharomyces pombe (strain 972 / ATCC 24843) (Fission yeast).